Consider the following 167-residue polypeptide: MSPRVLGGLAAFLCLVLDQANKLWLIHVFDIEARRPVRLAPFFDIIYERNPGISYSLFRAQSAMGRWILVALTLFAILLLSIWLWRATNRLVALALGCIIGGALGNAIDRIAAGAVADFYYFHIGSFSWYVFNLADAAIVAGVALLILDAFTSEEAGVPAPDSEGHS.

2 consecutive transmembrane segments (helical) span residues W67–A87 and L91–I111. Catalysis depends on residues D118 and D136. The chain crosses the membrane as a helical span at residues F127–I147.

It belongs to the peptidase A8 family.

The protein resides in the cell inner membrane. It carries out the reaction Release of signal peptides from bacterial membrane prolipoproteins. Hydrolyzes -Xaa-Yaa-Zaa-|-(S,diacylglyceryl)Cys-, in which Xaa is hydrophobic (preferably Leu), and Yaa (Ala or Ser) and Zaa (Gly or Ala) have small, neutral side chains.. The protein operates within protein modification; lipoprotein biosynthesis (signal peptide cleavage). Functionally, this protein specifically catalyzes the removal of signal peptides from prolipoproteins. This Beijerinckia indica subsp. indica (strain ATCC 9039 / DSM 1715 / NCIMB 8712) protein is Lipoprotein signal peptidase.